The primary structure comprises 78 residues: Putative protein PeaD (78 aa).

Belongs to the phage P protein family.

The polypeptide is Putative protein PeaD (peaD) (Escherichia coli (strain K12)).